The primary structure comprises 607 residues: Chaperone protein DnaK (607 aa).

Residue Thr174 is modified to Phosphothreonine; by autocatalysis. The interval 571–607 is disordered; the sequence is AAMYQKQAQQQQPGPGPDAGKDKDDKDKTVDADYEVK. Residues 589–607 are compositionally biased toward basic and acidic residues; that stretch reads AGKDKDDKDKTVDADYEVK.

This sequence belongs to the heat shock protein 70 family.

Functionally, acts as a chaperone. The sequence is that of Chaperone protein DnaK from Desulforudis audaxviator (strain MP104C).